Here is a 194-residue protein sequence, read N- to C-terminus: Flagellar transcriptional regulator FlhC (194 aa).

Residues cysteine 139, cysteine 142, cysteine 159, and cysteine 162 each contribute to the Zn(2+) site.

The protein belongs to the FlhC family. Heterohexamer composed of two FlhC and four FlhD subunits. Each FlhC binds a FlhD dimer, forming a heterotrimer, and a hexamer assembles by dimerization of two heterotrimers. Zn(2+) serves as cofactor.

The protein resides in the cytoplasm. Its function is as follows. Functions in complex with FlhD as a master transcriptional regulator that regulates transcription of several flagellar and non-flagellar operons by binding to their promoter region. Activates expression of class 2 flagellar genes, including fliA, which is a flagellum-specific sigma factor that turns on the class 3 genes. Also regulates genes whose products function in a variety of physiological pathways. The protein is Flagellar transcriptional regulator FlhC of Serratia marcescens.